We begin with the raw amino-acid sequence, 349 residues long: Glycerol-3-phosphate dehydrogenase [NAD(+)], cytoplasmic (349 aa).

Residues 10–15 (GSGDWG), Lys-120, and Ala-153 contribute to the NAD(+) site. Lys-120 is a binding site for substrate. Position 154 is a phosphoserine (Ser-154). Lys-204 functions as the Proton acceptor in the catalytic mechanism. Residue Arg-269 coordinates NAD(+). 269–270 (RN) serves as a coordination point for substrate. Lys-289 carries the post-translational modification N6-succinyllysine. NAD(+)-binding residues include Lys-296 and Gln-298. Position 326 is a phosphotyrosine (Tyr-326).

It belongs to the NAD-dependent glycerol-3-phosphate dehydrogenase family. Homodimer.

It localises to the cytoplasm. It catalyses the reaction sn-glycerol 3-phosphate + NAD(+) = dihydroxyacetone phosphate + NADH + H(+). Its function is as follows. Has glycerol-3-phosphate dehydrogenase activity. This Oryctolagus cuniculus (Rabbit) protein is Glycerol-3-phosphate dehydrogenase [NAD(+)], cytoplasmic (GPD1).